The sequence spans 170 residues: Translocator protein 2 (170 aa).

The next 5 helical transmembrane spans lie at 3–23 (LQGA…WLFT), 45–65 (VLLL…YLVW), 78–98 (LPLG…VLFF), 104–124 (GLAL…ALIW), and 130–150 (LAAL…ALTY).

This sequence belongs to the TspO/BZRP family. As to quaternary structure, homotetramer. May also form homodimer. In terms of tissue distribution, expressed in erythrocytes (at protein level).

Its subcellular location is the endoplasmic reticulum membrane. It is found in the cell membrane. Functionally, cholesterol-binding protein involved in the redistribution of cholesterol from lipid droplets to the endoplasmic reticulum. Required to meet cholesterol demands during erythropoietic differentiation. May play a role in transport processes at the plasma membrane of erythrocytes, including regulating VDAC-mediated ATP export, and import of the heme precursors protoporphyrin IX and 5-aminolevulinic acid. In Homo sapiens (Human), this protein is Translocator protein 2 (TSPO2).